The primary structure comprises 153 residues: Aspartate carbamoyltransferase regulatory chain (153 aa).

The Zn(2+) site is built by Cys-109, Cys-114, Cys-138, and Cys-141.

The protein belongs to the PyrI family. As to quaternary structure, contains catalytic and regulatory chains. Zn(2+) serves as cofactor.

Functionally, involved in allosteric regulation of aspartate carbamoyltransferase. In Salmonella schwarzengrund (strain CVM19633), this protein is Aspartate carbamoyltransferase regulatory chain.